Reading from the N-terminus, the 31-residue chain is Cyclotide mden-M (31 aa).

A cross-link (cyclopeptide (Gly-Asn)) is located at residues 1–31; sequence GTIPCGESCVYIPCITSALGCSCKKKVCYKN. 3 cysteine pairs are disulfide-bonded: C5/C21, C9/C23, and C14/C28.

Belongs to the cyclotide family. Bracelet subfamily. Post-translationally, this is a cyclic peptide.

In terms of biological role, probably participates in a plant defense mechanism. The protein is Cyclotide mden-M of Melicytus dentatus (Tree violet).